Reading from the N-terminus, the 342-residue chain is Aldo-keto reductase pigE (342 aa).

The first 27 residues, 1–27 (MGSISPKTRFPIVLGAGLIGSPGLFEG), serve as a signal peptide directing secretion. NADP(+) is bound at residue Asp-52. Tyr-57 acts as the Proton donor in catalysis. 2 residues coordinate NADP(+): Gln-182 and Arg-236. An N-linked (GlcNAc...) asparagine glycan is attached at Asn-271.

It belongs to the aldo/keto reductase family. Aldo/keto reductase 2 subfamily.

It participates in secondary metabolite biosynthesis. Aldo-keto reductase; part of the gene cluster that mediates the biosynthesis of azaphilone pigments (MonAzPs), a complex mixture of compounds with a common azaphilone skeleton very widely used as food colorants. Within the pathway, pigE is involved in the dehydration of the C-11 alcohol followed by the reduction of the C6(7) double bond which increases the electrophilicity of the C-5 ketone of the resulting acyl benzopyran and allows the intramolecular Knoevenagel aldol condensation with the C-20 enol of the side chain to yield the characteristic linear tricyclic carbon skeletons of the yellow pigments. The first step of the pathway is performed by the nrPKS pigA that forms the hexaketide precursor from successive condensations of five malonyl-CoA units, with a simple acetyl-CoA starter unit. The role of esterase pigG is not clear, but it may play at most a supplementary role in the formation of the benzaldehyde produced by the pigA nrPKS. This very reactive benzaldehyde is intercepted by the pigC ketoreductase that to provide the first stable enzyme-free MonAzPs intermediate, 6-(4-hydroxy-2-oxopentyl)-3-methyl-2,4-dioxocyclohexane carbaldehyde, also known as M7PKS-1. The FAD-dependent monooxygenase pigN hydroxylates M7PKS-1 at C-4, which triggers the formation of the pyran ring. PigJ, pigK and pigD are involved in the acetylation of the pyran ring. PigJ and pigK form the two subunits of a dedicated fungal FAS that produces the side chain fatty acyl moiety of MonAzPs and pigD transfers the fatty acyl chain to the C-4 alcohol. PigM and pigO are involved in the elimination of the omega-1 alcohol. PigM acts as an O-acetyltransferase that synthesizes the putative O-11 acetyl intermediate whereas pigO eliminates acetic acid to yield an intermediate with a C10(11) double bond. The dehydration of the C-11 alcohol followed by the reduction of the C6(7) double bond by the NAD(P)H-dependent oxidoreductase pigE increases the electrophilicity of the C-5 ketone of the resulting acyl benzopyran. This in turn sets up the C-5 ketone for an intramolecular Knoevenagel aldol condensation with the C-20 enol of the side chain. This condensation affords the characteristic linear tricyclic carbon skeletons of the yellow pigments that serve as the common precursors for the classical yellow pigments monascin and ankaflavin, orange pigments rubopunctatin and monascorubrin, and red pigments ribropunctamine and monascorubramine. The FAD-dependent oxidoreductase pigF is especially invoved in the biosynthesis of orange and red pigments via desaturation of C6(7). The sequence is that of Aldo-keto reductase pigE from Monascus ruber (Mold).